A 313-amino-acid polypeptide reads, in one-letter code: tRNA-cytidine(32) 2-sulfurtransferase (313 aa).

The PP-loop motif signature appears at 47–52 (SGGKDS). Positions 122, 125, and 213 each coordinate [4Fe-4S] cluster.

This sequence belongs to the TtcA family. In terms of assembly, homodimer. Mg(2+) is required as a cofactor. It depends on [4Fe-4S] cluster as a cofactor.

The protein localises to the cytoplasm. It catalyses the reaction cytidine(32) in tRNA + S-sulfanyl-L-cysteinyl-[cysteine desulfurase] + AH2 + ATP = 2-thiocytidine(32) in tRNA + L-cysteinyl-[cysteine desulfurase] + A + AMP + diphosphate + H(+). The protein operates within tRNA modification. Its function is as follows. Catalyzes the ATP-dependent 2-thiolation of cytidine in position 32 of tRNA, to form 2-thiocytidine (s(2)C32). The sulfur atoms are provided by the cysteine/cysteine desulfurase (IscS) system. This chain is tRNA-cytidine(32) 2-sulfurtransferase, found in Yersinia enterocolitica serotype O:8 / biotype 1B (strain NCTC 13174 / 8081).